The sequence spans 218 residues: Large ribosomal subunit protein uL3 (218 aa).

Disordered stretches follow at residues 128-167 (FSRGPMSHGSKNHRLPGSIGAGTTPGRVYPGKRMAGRMGG) and 199-218 (SLLNIRPAKRVGAPTQQGGK).

Belongs to the universal ribosomal protein uL3 family. In terms of assembly, part of the 50S ribosomal subunit. Forms a cluster with proteins L14 and L19.

In terms of biological role, one of the primary rRNA binding proteins, it binds directly near the 3'-end of the 23S rRNA, where it nucleates assembly of the 50S subunit. The polypeptide is Large ribosomal subunit protein uL3 (Prochlorococcus marinus (strain NATL2A)).